Consider the following 269-residue polypeptide: MKPLNILISNDDGVFAAGIRALAKSAQKRGHKVKVVCPDQERSATGHGLTLQSPLRVEKADELFGDGIEAWGCSGTPADCVKLALSELLDNKPDLILSGINHGPNLGTDIFCSGTVAAAMEGTLENVPSMAISVASFKWKNFEYAGEIAINIAEQAINDNWPASLLLNLNIPPCAKSKIKELSWTRLSVRKYKNQFSKREDPRGDDYYWLAGEVVLDLKSKGYGPKNWPSDVSQIQNNKISLTPVEPDLFWRGNLDDLPKINNSFVNPS.

Positions 11, 12, 43, and 101 each coordinate a divalent metal cation.

This sequence belongs to the SurE nucleotidase family. The cofactor is a divalent metal cation.

It localises to the cytoplasm. It catalyses the reaction a ribonucleoside 5'-phosphate + H2O = a ribonucleoside + phosphate. In terms of biological role, nucleotidase that shows phosphatase activity on nucleoside 5'-monophosphates. This is 5'-nucleotidase SurE from Prochlorococcus marinus (strain MIT 9301).